A 191-amino-acid chain; its full sequence is Fe/S biogenesis protein NfuA (191 aa).

[4Fe-4S] cluster contacts are provided by C149 and C152.

Belongs to the NfuA family. Homodimer. [4Fe-4S] cluster is required as a cofactor.

Its function is as follows. Involved in iron-sulfur cluster biogenesis. Binds a 4Fe-4S cluster, can transfer this cluster to apoproteins, and thereby intervenes in the maturation of Fe/S proteins. Could also act as a scaffold/chaperone for damaged Fe/S proteins. The chain is Fe/S biogenesis protein NfuA from Yersinia pseudotuberculosis serotype O:1b (strain IP 31758).